The following is a 237-amino-acid chain: MTPQDFYRTLEEDGFSLSSKQKEQFDTYFKLLVEWNTKINLTAITEENEVYPQHFYDSIAPILQAFLANEPIKLLDIGAGAGFPSLPMKILFPNLEVTIIDSLNKRISFLTLLAQELGLENVHFFHGRAEDFGQDKAFRGQFDVVTARAVARMQVLSELTIPFLKIGGKLIALKAQAADQELEEAKNALCLLFGKVIKNHSYQLPNGDSRFITIVEKKKETPNKYPRKAGLPNKKPL.

Residues glycine 78, phenylalanine 83, 129–130 (AE), and arginine 148 contribute to the S-adenosyl-L-methionine site.

Belongs to the methyltransferase superfamily. RNA methyltransferase RsmG family.

It is found in the cytoplasm. In terms of biological role, specifically methylates the N7 position of a guanine in 16S rRNA. In Streptococcus pyogenes serotype M12 (strain MGAS9429), this protein is Ribosomal RNA small subunit methyltransferase G.